We begin with the raw amino-acid sequence, 831 residues long: MLTIQFLCPLPNGLHARPAWELKEQCSQWQSEITFINHRQNAKADAKSSLALIGTGTLFNDSCSLNISGSDEEQARRVLEEYIQVRFIDSDSVQPTQAELTAHPLPRSLSRLNPDLLYGNVLASGVGVGTLTLLQSDSLDSYRAIPASAQDSTRLEHSLATLAEQLNQQLRERDGESKTILSAHLSLIQDDEFAGNIRRLMTEQHQGLGAAIIRNMEQVCAKLSASASDYLRERVSDIRDISEQLLHITWPELKPRNNLVLEKPTILVAEDLTPSQFLSLDLKNLAGMILEKTGRTSHTLILARASAIPVLSGLPLDAIARYAGQPAVLDAQCGVLAINPNDAVSGYYQVAQTLADKRQKQQAQAAAQLAYSRDNKRIDIAANIGTALEAPGAFANGAEGVGLFRTEMLYMDRDSEPDEQEQFEAYQQVLLAAGDKPIIFRTMDIGGDKSIPYLNIPQEENPFLGYRAVRIYPEFAGLFRTQLRAILRAASFGNAQLMIPMVHGLDQILWVKGEIQKAIVELKRDGLRHAETITLGIMVEVPSVCYIIDHFCDEVDFFSIGSNDMTQYLYAVDRNNPRVSPLYNPITPSFLRMLQQIVTTAHQRGKWVGICGELGGESRYLPLLLGLGLDELSMSSPRIPAVKSQLRQLDSEACRELARQACECRSAQEIEALLTAFTPEEDVRPLLALENIFVDQAFSNKEQAIQFLCGNLGVNGRTEHPFELEEDVWQREEIVTTGVGFGVAIPHTKSQWIRHSSISIARLAKPVDWQSEMGEVELVIMLTLGANEGMNHVKVFSQLARKLVNKNFRQSLFAAQDAQSILTLLETELTF.

An HPr domain is found at 1–90 (MLTIQFLCPL…EYIQVRFIDS (90 aa)). The Pros-phosphohistidine intermediate; for HPr activity role is filled by histidine 15. Histidine 15 carries the post-translational modification Phosphohistidine; by EI. The PTS EI stretch occupies residues 119-650 (GNVLASGVGV…AVKSQLRQLD (532 aa)). Catalysis depends on histidine 298, which acts as the Tele-phosphohistidine intermediate; for PTS EI activity. Histidine 298 bears the Phosphohistidine; by autocatalysis mark. Phosphoenolpyruvate is bound by residues arginine 405 and arginine 441. Residues glutamate 540 and aspartate 564 each contribute to the Mg(2+) site. Phosphoenolpyruvate contacts are provided by residues 563-564 (ND) and arginine 574. Residue cysteine 611 is the Proton donor; for EI activity of the active site. Residues 685–828 (PLLALENIFV…QSILTLLETE (144 aa)) enclose the PTS EIIA type-2 domain. Histidine 747 functions as the Tele-phosphohistidine intermediate; for PTS EIIA activity in the catalytic mechanism. Residue histidine 747 is modified to Phosphohistidine; by HPr.

It belongs to the PEP-utilizing enzyme family. Requires Mg(2+) as cofactor.

It localises to the cytoplasm. The catalysed reaction is L-histidyl-[protein] + phosphoenolpyruvate = N(pros)-phospho-L-histidyl-[protein] + pyruvate. The enzyme catalyses D-fructose(out) + N(pros)-phospho-L-histidyl-[protein] = D-fructose 1-phosphate(in) + L-histidyl-[protein]. Its function is as follows. Multifunctional protein that includes general (non sugar-specific) and sugar-specific components of the phosphoenolpyruvate-dependent sugar phosphotransferase system (sugar PTS). This major carbohydrate active transport system catalyzes the phosphorylation of incoming sugar substrates concomitantly with their translocation across the cell membrane. The enzyme II FryABC PTS system is involved in fructose transport. The sequence is that of Multiphosphoryl transfer protein (fryA) from Escherichia coli O157:H7.